The chain runs to 802 residues: Leucine--tRNA ligase (802 aa).

Residues 40–51 carry the 'HIGH' region motif; that stretch reads PYPSGAGLHVGH. Residues 576–580 carry the 'KMSKS' region motif; sequence KMSKS. Residue lysine 579 coordinates ATP.

This sequence belongs to the class-I aminoacyl-tRNA synthetase family.

The protein localises to the cytoplasm. The catalysed reaction is tRNA(Leu) + L-leucine + ATP = L-leucyl-tRNA(Leu) + AMP + diphosphate. This is Leucine--tRNA ligase from Bacillus cereus (strain ATCC 14579 / DSM 31 / CCUG 7414 / JCM 2152 / NBRC 15305 / NCIMB 9373 / NCTC 2599 / NRRL B-3711).